A 371-amino-acid polypeptide reads, in one-letter code: Queuine tRNA-ribosyltransferase (371 aa).

The active-site Proton acceptor is the Asp90. Residues 90–94 (DSGGF), Asp144, Gln189, and Gly215 each bind substrate. Residues 246–252 (GVGTPEN) are RNA binding. Residue Asp265 is the Nucleophile of the active site. An RNA binding; important for wobble base 34 recognition region spans residues 270–274 (TRNAR). Zn(2+) is bound by residues Cys303, Cys305, Cys308, and His334.

The protein belongs to the queuine tRNA-ribosyltransferase family. Homodimer. Within each dimer, one monomer is responsible for RNA recognition and catalysis, while the other monomer binds to the replacement base PreQ1. Requires Zn(2+) as cofactor.

The enzyme catalyses 7-aminomethyl-7-carbaguanine + guanosine(34) in tRNA = 7-aminomethyl-7-carbaguanosine(34) in tRNA + guanine. Its pathway is tRNA modification; tRNA-queuosine biosynthesis. Its function is as follows. Catalyzes the base-exchange of a guanine (G) residue with the queuine precursor 7-aminomethyl-7-deazaguanine (PreQ1) at position 34 (anticodon wobble position) in tRNAs with GU(N) anticodons (tRNA-Asp, -Asn, -His and -Tyr). Catalysis occurs through a double-displacement mechanism. The nucleophile active site attacks the C1' of nucleotide 34 to detach the guanine base from the RNA, forming a covalent enzyme-RNA intermediate. The proton acceptor active site deprotonates the incoming PreQ1, allowing a nucleophilic attack on the C1' of the ribose to form the product. After dissociation, two additional enzymatic reactions on the tRNA convert PreQ1 to queuine (Q), resulting in the hypermodified nucleoside queuosine (7-(((4,5-cis-dihydroxy-2-cyclopenten-1-yl)amino)methyl)-7-deazaguanosine). This Helicobacter pylori (strain J99 / ATCC 700824) (Campylobacter pylori J99) protein is Queuine tRNA-ribosyltransferase.